The following is an 87-amino-acid chain: Exendin-4 (87 aa).

The signal sequence occupies residues 1–23 (MKIILWLCVFGLFLATLFPISWQ). The propeptide occupies 24–45 (MPVESGLSSEDSASSESFASKI). Serine 86 bears the Serine amide mark.

Belongs to the glucagon family. In terms of tissue distribution, expressed by the venom gland.

Its subcellular location is the secreted. Venom protein that mimics the incretin hormone glucagon-like peptide 1 (GLP-1). It stimulates insulin synthesis and secretion, protects against beta-cell apoptosis in response to different insults, and promotes beta-cell proliferation It also promotes satiety, reduces food intake, reduces fat deposition, reduces body weight and inhibits gastric emptying. Interacts with GLP-1 receptor (GLP1R). Induces hypotension that is mediated by relaxation of cardiac smooth muscle. The polypeptide is Exendin-4 (Heloderma suspectum cinctum (Banded Gila monster)).